A 316-amino-acid polypeptide reads, in one-letter code: HPr kinase/phosphorylase (316 aa).

Active-site residues include histidine 141 and lysine 162. ATP is bound at residue glycine 156–serine 163. Position 163 (serine 163) interacts with Mg(2+). Aspartate 180 (proton acceptor; for phosphorylation activity. Proton donor; for dephosphorylation activity) is an active-site residue. The tract at residues methionine 204–aspartate 213 is important for the catalytic mechanism of both phosphorylation and dephosphorylation. Glutamate 205 is a Mg(2+) binding site. Residue arginine 246 is part of the active site. The important for the catalytic mechanism of dephosphorylation stretch occupies residues proline 267–arginine 272.

Belongs to the HPrK/P family. As to quaternary structure, homohexamer. It depends on Mg(2+) as a cofactor.

It catalyses the reaction [HPr protein]-L-serine + ATP = [HPr protein]-O-phospho-L-serine + ADP + H(+). The catalysed reaction is [HPr protein]-O-phospho-L-serine + phosphate + H(+) = [HPr protein]-L-serine + diphosphate. In terms of biological role, catalyzes the ATP- as well as the pyrophosphate-dependent phosphorylation of a specific serine residue in HPr, a phosphocarrier protein of the phosphoenolpyruvate-dependent sugar phosphotransferase system (PTS). HprK/P also catalyzes the pyrophosphate-producing, inorganic phosphate-dependent dephosphorylation (phosphorolysis) of seryl-phosphorylated HPr (P-Ser-HPr). The two antagonistic activities of HprK/P are regulated by several intracellular metabolites, which change their concentration in response to the absence or presence of rapidly metabolisable carbon sources (glucose, fructose, etc.) in the growth medium. Therefore, by controlling the phosphorylation state of HPr, HPrK/P is a sensor enzyme that plays a major role in the regulation of carbon metabolism and sugar transport: it mediates carbon catabolite repression (CCR), and regulates PTS-catalyzed carbohydrate uptake and inducer exclusion. This chain is HPr kinase/phosphorylase, found in Lactobacillus delbrueckii subsp. bulgaricus (strain ATCC 11842 / DSM 20081 / BCRC 10696 / JCM 1002 / NBRC 13953 / NCIMB 11778 / NCTC 12712 / WDCM 00102 / Lb 14).